Consider the following 110-residue polypeptide: Large ribosomal subunit protein P2B (110 aa).

Over residues 73 to 88 the composition is skewed to low complexity; that stretch reads TPAAGGAAGAEATSAA. Residues 73–110 are disordered; that stretch reads TPAAGGAAGAEATSAAEEAKEEEAAEESDEDMGFGLFD. A compositionally biased stretch (acidic residues) spans 91-104; that stretch reads AKEEEAAEESDEDM. Serine 100 is modified (phosphoserine).

Belongs to the eukaryotic ribosomal protein P1/P2 family. In terms of assembly, component of the large ribosomal subunit (LSU). Mature yeast ribosomes consist of a small (40S) and a large (60S) subunit. The 40S small subunit contains 1 molecule of ribosomal RNA (18S rRNA) and at least 33 different proteins. The large 60S subunit contains 3 rRNA molecules (25S, 5.8S and 5S rRNA) and at least 46 different proteins. The acidic ribosomal P-proteins form the stalk structure of the 60S subunit. They are organized as a pentameric complex in which uL10/P0 interacts with 2 heterodimers of P1 and P2 proteins.

The protein localises to the cytoplasm. In terms of biological role, component of the ribosome, a large ribonucleoprotein complex responsible for the synthesis of proteins in the cell. The small ribosomal subunit (SSU) binds messenger RNAs (mRNAs) and translates the encoded message by selecting cognate aminoacyl-transfer RNA (tRNA) molecules. The large subunit (LSU) contains the ribosomal catalytic site termed the peptidyl transferase center (PTC), which catalyzes the formation of peptide bonds, thereby polymerizing the amino acids delivered by tRNAs into a polypeptide chain. The nascent polypeptides leave the ribosome through a tunnel in the LSU and interact with protein factors that function in enzymatic processing, targeting, and the membrane insertion of nascent chains at the exit of the ribosomal tunnel. The protein is Large ribosomal subunit protein P2B (rpp202) of Schizosaccharomyces pombe (strain 972 / ATCC 24843) (Fission yeast).